Consider the following 131-residue polypeptide: C-type natriuretic peptide 1 (131 aa).

The N-terminal stretch at 1–22 (MLYPALLCAALLLIAPLGHTEG) is a signal peptide. Positions 23–109 (RTLHPSPDAI…KRAVMDRSRR (87 aa)) are excised as a propeptide. The cysteines at positions 115 and 131 are disulfide-linked.

This sequence belongs to the natriuretic peptide family. As to expression, expressed in brain and to a low extent in atrium.

The protein resides in the secreted. Functionally, exhibits natriuretic and vasodepressant activity. Has a cGMP-stimulating activity. This Oncorhynchus mykiss (Rainbow trout) protein is C-type natriuretic peptide 1.